Here is a 330-residue protein sequence, read N- to C-terminus: Pre-mRNA-splicing factor 38 (330 aa).

Residues 182–330 form a disordered region; that stretch reads SVLDEDLDDE…SRGERDRRRY (149 aa). Residues 184–199 are compositionally biased toward acidic residues; sequence LDEDLDDELPSDEEKA. Residues 213–224 are compositionally biased toward basic residues; sequence RRPRRVRSKSRS. Residues 240–330 show a composition bias toward basic and acidic residues; sequence RSRDYYDELE…SRGERDRRRY (91 aa).

Belongs to the PRP38 family. In terms of assembly, component of the spliceosome C complex. Interacts with Mfap1 (via C-terminus). Detected in all germal and follicle cells.

It localises to the nucleus. Required for pre-mRNA splicing. The chain is Pre-mRNA-splicing factor 38 from Drosophila melanogaster (Fruit fly).